The sequence spans 377 residues: F-box protein At1g11810 (377 aa).

Residues 2-48 enclose the F-box domain; it reads TTTMSTLPVVLVDEILARVPITSLRSLRSTCKKWEASSKTNLVGGKA.

In Arabidopsis thaliana (Mouse-ear cress), this protein is F-box protein At1g11810.